A 583-amino-acid chain; its full sequence is Proline--tRNA ligase (583 aa).

Belongs to the class-II aminoacyl-tRNA synthetase family. ProS type 1 subfamily. In terms of assembly, homodimer.

It localises to the cytoplasm. The enzyme catalyses tRNA(Pro) + L-proline + ATP = L-prolyl-tRNA(Pro) + AMP + diphosphate. In terms of biological role, catalyzes the attachment of proline to tRNA(Pro) in a two-step reaction: proline is first activated by ATP to form Pro-AMP and then transferred to the acceptor end of tRNA(Pro). As ProRS can inadvertently accommodate and process non-cognate amino acids such as alanine and cysteine, to avoid such errors it has two additional distinct editing activities against alanine. One activity is designated as 'pretransfer' editing and involves the tRNA(Pro)-independent hydrolysis of activated Ala-AMP. The other activity is designated 'posttransfer' editing and involves deacylation of mischarged Ala-tRNA(Pro). The misacylated Cys-tRNA(Pro) is not edited by ProRS. This Acidothermus cellulolyticus (strain ATCC 43068 / DSM 8971 / 11B) protein is Proline--tRNA ligase.